Reading from the N-terminus, the 348-residue chain is Holliday junction branch migration complex subunit RuvB (348 aa).

Residues 4 to 186 (TDRIISANTV…FGIIQRLEFY (183 aa)) are large ATPase domain (RuvB-L). ATP-binding positions include I25, R26, G67, K70, T71, T72, 133 to 135 (EDY), R176, Y186, and R223. T71 is a Mg(2+) binding site. The segment at 187–257 (SVDDLAKIVY…IADKALTMLK (71 aa)) is small ATPAse domain (RuvB-S). Positions 260–348 (PVGFDHMDHK…SSDQQQNLSL (89 aa)) are head domain (RuvB-H). The DNA site is built by R315 and R320.

Belongs to the RuvB family. Homohexamer. Forms an RuvA(8)-RuvB(12)-Holliday junction (HJ) complex. HJ DNA is sandwiched between 2 RuvA tetramers; dsDNA enters through RuvA and exits via RuvB. An RuvB hexamer assembles on each DNA strand where it exits the tetramer. Each RuvB hexamer is contacted by two RuvA subunits (via domain III) on 2 adjacent RuvB subunits; this complex drives branch migration. In the full resolvosome a probable DNA-RuvA(4)-RuvB(12)-RuvC(2) complex forms which resolves the HJ.

Its subcellular location is the cytoplasm. It catalyses the reaction ATP + H2O = ADP + phosphate + H(+). In terms of biological role, the RuvA-RuvB-RuvC complex processes Holliday junction (HJ) DNA during genetic recombination and DNA repair, while the RuvA-RuvB complex plays an important role in the rescue of blocked DNA replication forks via replication fork reversal (RFR). RuvA specifically binds to HJ cruciform DNA, conferring on it an open structure. The RuvB hexamer acts as an ATP-dependent pump, pulling dsDNA into and through the RuvAB complex. RuvB forms 2 homohexamers on either side of HJ DNA bound by 1 or 2 RuvA tetramers; 4 subunits per hexamer contact DNA at a time. Coordinated motions by a converter formed by DNA-disengaged RuvB subunits stimulates ATP hydrolysis and nucleotide exchange. Immobilization of the converter enables RuvB to convert the ATP-contained energy into a lever motion, pulling 2 nucleotides of DNA out of the RuvA tetramer per ATP hydrolyzed, thus driving DNA branch migration. The RuvB motors rotate together with the DNA substrate, which together with the progressing nucleotide cycle form the mechanistic basis for DNA recombination by continuous HJ branch migration. Branch migration allows RuvC to scan DNA until it finds its consensus sequence, where it cleaves and resolves cruciform DNA. The chain is Holliday junction branch migration complex subunit RuvB from Francisella philomiragia subsp. philomiragia (strain ATCC 25017 / CCUG 19701 / FSC 153 / O#319-036).